The following is a 492-amino-acid chain: 3-octaprenyl-4-hydroxybenzoate carboxy-lyase (492 aa).

Residue Asn-177 participates in Mn(2+) binding. Residues Ile-180–Arg-182, Arg-194–Leu-196, and Arg-199–Gly-200 contribute to the prenylated FMN site. Residue Glu-243 participates in Mn(2+) binding. The active-site Proton donor is Asp-292.

It belongs to the UbiD family. Homohexamer. It depends on prenylated FMN as a cofactor. Mn(2+) is required as a cofactor.

Its subcellular location is the cell membrane. The enzyme catalyses a 4-hydroxy-3-(all-trans-polyprenyl)benzoate + H(+) = a 2-(all-trans-polyprenyl)phenol + CO2. Its pathway is cofactor biosynthesis; ubiquinone biosynthesis. Functionally, catalyzes the decarboxylation of 3-octaprenyl-4-hydroxy benzoate to 2-octaprenylphenol, an intermediate step in ubiquinone biosynthesis. This Neisseria meningitidis serogroup C / serotype 2a (strain ATCC 700532 / DSM 15464 / FAM18) protein is 3-octaprenyl-4-hydroxybenzoate carboxy-lyase.